An 801-amino-acid chain; its full sequence is U-box domain-containing protein 44 (801 aa).

Residues 22 to 101 form the U-box domain; sequence HIYEAFICPL…EEWRSRNDAA (80 aa). ARM repeat units lie at residues 134–173, 176–215, 218–259, 261–300, 301–340, 342–386, 390–429, 435–475, and 480–521; these read RSNRHGVRNSQLIHMIIDMLKSTSHRVRYKALQTLQVVVE, DESKAIVAEGDTVRTLVKFLSHEPSKGREAAVSLLFELSK, ALCE…NMER, EEIVRQMASYGRLQPLLGKLLEGSPETKLSMASFLGELPL, NNDVKVLVAQTVGSSLVDLMRSGDMPQREAALKALNKISS, EGSA…NIVN, DFDKATLVSENRVENLLHLISNTGPAIQCKLLEVLVGLTS, PKVV…NLSP, and ELAK…ELPD.

Interacts with AAO3. Binds to SD129. As to expression, expressed in leaves, root vasculature and guard cells.

It catalyses the reaction S-ubiquitinyl-[E2 ubiquitin-conjugating enzyme]-L-cysteine + [acceptor protein]-L-lysine = [E2 ubiquitin-conjugating enzyme]-L-cysteine + N(6)-ubiquitinyl-[acceptor protein]-L-lysine.. Its pathway is protein modification; protein ubiquitination. Functionally, functions as an E3 ubiquitin-protein ligase. Prevents premature senescence probably by targeting proteins involved in this process for degradation. Promotes the degradation of AAO3 and thus represses abscisic acid (ABA) biosynthesis. The protein is U-box domain-containing protein 44 (PUB44) of Arabidopsis thaliana (Mouse-ear cress).